A 1894-amino-acid chain; its full sequence is Adenylate kinase 9 (1894 aa).

The interval 32–286 is adenylate kinase 1; it reads TCFIIFGKPG…LFMTVIERLK (255 aa). 41-46 is a binding site for ATP; that stretch reads GAGKTT. The tract at residues 61 to 90 is NMP 1; it reads EALSVLEEHIAAEKETGAMLQSLLVSGHSI. 117 to 120 is a binding site for AMP; sequence EMPS. Residues 161-206 are LID 1; it reads GQRQHSTTGYVYTREQWDPEIIESRRRKKRDFPKEGKSEEEEEEEE. Residues 188–211 are disordered; sequence KKRDFPKEGKSEEEEEEEEQEEEE. The segment covering 198 to 211 has biased composition (acidic residues); that stretch reads SEEEEEEEEQEEEE. R230 contacts AMP. Residues 451–478 adopt a coiled-coil conformation; the sequence is IKVVQQRLLNEKQAKQQEERTLKELQVQ. The segment at 492–533 is disordered; the sequence is SEELPSLENTGSKLSSLEIGQEDKSKSETTITGDQVKDVSTE. A coiled-coil region spans residues 651 to 691; it reads LERLQEEAQAKKREEEEIRKVKEEELRLEEEKQRLMELATK. 2 disordered regions span residues 710–789 and 876–911; these read PYPD…LGSE and EEEA…EKRR. Residues 715 to 736 are compositionally biased toward acidic residues; the sequence is PDNEAEEEVEDSEIHEESEAQE. 2 stretches are compositionally biased toward basic and acidic residues: residues 757–768 and 777–789; these read EGDHEPEAEFKP and ETEK…LGSE. Residues 876–903 show a composition bias toward acidic residues; that stretch reads EEEAEDYQAETEIDEEQEEEEEEEEEGE. The interval 976–1187 is adenylate kinase 2; the sequence is LRICLLGPHG…VAKRRAELIL (212 aa). 985-990 contacts ATP; sequence GSGKTV. The tract at residues 1005-1036 is NMP 2; that stretch reads QFDEFLQEKMLLKAERKFGPEFEDDSEEEQLV. Residues 1034-1036 and 1063-1066 contribute to the AMP site; these read QLV and VQLT. The interval 1108–1128 is LID 2; it reads DGFPRHPEEAQFLGERGFFPD. A compositionally biased stretch (acidic residues) spans 1223–1241; that stretch reads EFPKDEEEMSEEDEEQEAD. The interval 1223-1243 is disordered; the sequence is EFPKDEEEMSEEDEEQEADAT. Residues 1395 to 1584 are adenylate kinase 3; the sequence is VRIMIVGPPK…VWNEVLKDIQ (190 aa). 1404 to 1409 is a binding site for ATP; sequence KSGKTT. Residues 1424–1455 form an NMP 3 region; that stretch reads SVGDALRGMLNNHPDSELSLMLNWHLHKGKTV. AMP is bound by residues R1430, 1482-1485, and Q1489; that span reads GYPV. The interval 1519 to 1533 is LID 3; the sequence is LEKKTEQSMSYPLHN.

Belongs to the adenylate kinase family. Highly expressed in the testis.

Its subcellular location is the cytoplasm. The protein resides in the nucleus. The protein localises to the cell projection. It is found in the cilium. It localises to the flagellum. It carries out the reaction a ribonucleoside 5'-phosphate + ATP = a ribonucleoside 5'-diphosphate + ADP. The catalysed reaction is AMP + ATP = 2 ADP. It catalyses the reaction GTP + AMP = GDP + ADP. The enzyme catalyses CMP + ATP = CDP + ADP. It carries out the reaction GTP + CMP = CDP + GDP. The catalysed reaction is dAMP + ATP = dADP + ADP. It catalyses the reaction dCMP + ATP = dCDP + ADP. The enzyme catalyses a ribonucleoside 5'-diphosphate + ATP = a ribonucleoside 5'-triphosphate + ADP. It carries out the reaction CDP + ATP = CTP + ADP. The catalysed reaction is CDP + GTP = CTP + GDP. It catalyses the reaction GDP + ATP = GTP + ADP. The enzyme catalyses UDP + ATP = UTP + ADP. It carries out the reaction GTP + UDP = UTP + GDP. The catalysed reaction is dTDP + GTP = dTTP + GDP. It catalyses the reaction dCDP + ATP = dCTP + ADP. The enzyme catalyses dCDP + GTP = dCTP + GDP. It carries out the reaction dGDP + ATP = dGTP + ADP. The catalysed reaction is dTDP + ATP = dTTP + ADP. It catalyses the reaction dADP + GTP = dATP + GDP. Functionally, broad-specificity nucleoside phosphate kinase involved in cellular nucleotide homeostasis by catalyzing nucleoside-phosphate interconversions. Similar to other adenylate kinases, preferentially catalyzes the phosphorylation of the nucleoside monophosphate AMP with ATP as phosphate donor to produce ADP. In vitro, can also catalyze the phosphorylation of CMP, dAMP and dCMP and use GTP as an alternate phosphate donor. Moreover, exhibits a diphosphate kinase activity, producing ATP, CTP, GTP, UTP, TTP, dATP, dCTP and dGTP from the corresponding diphosphate substrates with either ATP or GTP as phosphate donors. For this activity shows the following substrate preference CDP &gt; UDP &gt; ADP &gt; TDP. This chain is Adenylate kinase 9, found in Mus musculus (Mouse).